The primary structure comprises 574 residues: Golgin subfamily A member 6-like protein 4 (574 aa).

Residues 1–11 (MWPQPRFPPHP) are compositionally biased toward pro residues. 2 disordered regions span residues 1–77 (MWPQ…YGEG) and 491–552 (KELK…AAGG). The segment covering 51-62 (NGSSPDTATSGG) has biased composition (polar residues). A coiled-coil region spans residues 157–496 (SKVEQLQDET…EQQVKELKKS (340 aa)). Over residues 491 to 504 (KELKKSGGAEEPRG) the composition is skewed to basic and acidic residues. Residues 508–523 (AAAARPVAGAPVPQGA) are compositionally biased toward low complexity.

It belongs to the GOLGA6 family.

This is Golgin subfamily A member 6-like protein 4 (GOLGA6L4) from Homo sapiens (Human).